Reading from the N-terminus, the 208-residue chain is Attacin-A (208 aa).

Residues 1 to 20 (MQSFKICFFISCLSVVLVKG) form the signal peptide. Residues 21–47 (QFGGTVSSNPNGGLDVNARLSKTIGDP) constitute a propeptide that is removed on maturation.

As to expression, hemolymph and fat body.

It is found in the secreted. Hemolymph antibacterial protein against Gram-negative bacteria. The protein is Attacin-A of Glossina morsitans morsitans (Savannah tsetse fly).